A 236-amino-acid chain; its full sequence is Syntaxin-8 (236 aa).

Residues 1 to 215 (MAPDPWFSTY…LVDRKSTSCG (215 aa)) lie on the Cytoplasmic side of the membrane. Positions 42 to 65 (VTIRALLQKLKEKIALLKDLLLRA) form a coiled coil. One can recognise a t-SNARE coiled-coil homology domain in the interval 145–207 (QKIIQEQDAG…RTETRRVNLV (63 aa)). Phosphoserine is present on serine 160. Residues 216–232 (MIMVILLLLVAIVVVAV) traverse the membrane as a helical; Anchor for type IV membrane protein segment. Topologically, residues 233–236 (WPTK) are vesicular.

Belongs to the syntaxin family. In terms of assembly, forms a SNARE complex with STX7, VTI1B and VAMP8 which functions in the homotypic fusion of late endosomes. Part of the SNARE core complex containing STX7, VAMP8 and VTI1B. Interacts with VAMP8. Interacts with HECTD3. Interacts with TPC1. In terms of processing, ubiquitinated by HECTD3.

The protein localises to the membrane. Functionally, vesicle trafficking protein that functions in the early secretory pathway, possibly by mediating retrograde transport from cis-Golgi membranes to the ER. The protein is Syntaxin-8 (STX8) of Bos taurus (Bovine).